Reading from the N-terminus, the 1047-residue chain is Protein masquerade (1047 aa).

The first 30 residues, 1–30, serve as a signal peptide directing secretion; sequence MPRHSSTMSRLVLPLIFSILLVSKPSPSQA. The segment at 54–87 is CLIP 1; that stretch reads KDCPGVCVHTLATLICYEVLDDVACPSPSMKCCI. 3 disulfides stabilise this stretch: C56–C85, C60–C78, and C69–C86. N-linked (GlcNAc...) asparagine glycosylation is present at N95. Low complexity-rich tracts occupy residues 98–139 and 148–175; these read AVRA…STTP and KRPATSSTTKATVATTKKPSTTKKVATA. A disordered region spans residues 98 to 189; sequence AVRATTTPKT…KEEATKADDA (92 aa). Residues 176–189 show a composition bias toward basic and acidic residues; the sequence is KPKDKEEATKADDA. A CLIP 2 region spans residues 192-224; that stretch reads DCTGVCVADRIAEYCEAYLTSDGLCKEGTKCCV. 3 disulfide bridges follow: C193/C222, C197/C216, and C206/C223. N251 carries an N-linked (GlcNAc...) asparagine glycan. Residues 252–335 form a disordered region; it reads QTLSEKSAPA…PLSNKLKSGQ (84 aa). Residues 263–280 are compositionally biased toward low complexity; sequence SSSTSTTSTTTTTSTTTT. N-linked (GlcNAc...) asparagine glycosylation occurs at N287. Residues 307 to 325 show a composition bias toward acidic residues; that stretch reads AAEEEEEQETEEDGEEEEP. The interval 343–374 is CLIP 3; it reads ECEGECMNGIFAIFCDDIDSDAFCPGEESCCV. 3 disulfides stabilise this stretch: C344–C372, C348–C366, and C357–C373. Positions 376–428 are disordered; sequence GGASEATPSSKAPPTKPAIKHAPKPAAKPARPASPPPAPPSSTSGGGGGGDFL. The interval 457–492 is CLIP 4; the sequence is RCPGFCLLNIMAAFCERPSVLVSTPTTCAKGSVCCD. Cystine bridges form between C458/C490, C462/C484, and C471/C491. The interval 498-527 is disordered; sequence APKPKLPPPTPSPTASPTAPPYVLPNTPSP. The segment covering 501 to 527 has biased composition (pro residues); the sequence is PKLPPPTPSPTASPTAPPYVLPNTPSP. The segment at 532-567 is CLIP 5; the sequence is ECPGSCIVSLLSFTCFKNAEMTDLFRCKRSGQICCA. 3 disulfides stabilise this stretch: C533-C565, C537-C558, and C546-C566. N-linked (GlcNAc...) asparagine glycosylation occurs at N582. A disordered region spans residues 583–673; sequence DTAYYPAPPP…TTTTTTTTPR (91 aa). Composition is skewed to pro residues over residues 588–606, 613–638, and 650–661; these read PAPPPPPIGPPQAYPPQTP, NPPPQGPPPQMAPHHPNPYQPPPPAP, and GLPPQPQPPMTT. Residues 662-672 are compositionally biased toward low complexity; it reads PPTTTTTTTTP. 5 cysteine pairs are disulfide-bonded: C682–C916, C829–C845, C930–C1001, C961–C981, and C991–C1019. 2 N-linked (GlcNAc...) asparagine glycosylation sites follow: N726 and N794. A peptidase S1 region spans residues 803–1043; it reads VVGGEDGENG…FIGWINQIIS (241 aa).

The protein belongs to the peptidase S1 family. CLIP subfamily. Proteolytically cleaved and thereafter secreted.

The protein localises to the secreted. It is found in the cell projection. Its subcellular location is the axon. In embryogenesis, has a role in somatic muscle attachment and in the development of axonal pathways probably by stabilizing cell-matrix adhesion and/or by acting as a competitive antagonist of serine proteases. This Drosophila melanogaster (Fruit fly) protein is Protein masquerade.